The sequence spans 76 residues: Conotoxin TsMLCL-03 (76 aa).

Positions 1 to 19 are cleaved as a signal peptide; the sequence is MLCLPVFIILLLLASPAAP. A propeptide spanning residues 20 to 44 is cleaved from the precursor; it reads NPLERRIQSDLIRTALEDADMKTPK.

The protein belongs to the conotoxin T superfamily. Post-translationally, contains 2 disulfide bonds that can be either 'C1-C3, C2-C4' or 'C1-C4, C2-C3', since these disulfide connectivities have been observed for conotoxins with cysteine framework V (for examples, see AC P0DQQ7 and AC P81755). Expressed by the venom duct.

The protein localises to the secreted. The polypeptide is Conotoxin TsMLCL-03 (Conus tessulatus (Tessellate cone)).